The following is a 142-amino-acid chain: MSVVSVSMPEELLERLDDFADDHGYTGRSEVVREASRNLLGEFEDKKLEGRELMGVVTVVFDYETTTVEEKMMHLRHEHEGLVASNFHSHVGGHHCMELFVLEGSLESISTFVGKIRATKDTLTIDYSVLPVDEFGGLADVS.

The Ni(2+) site is built by histidine 77, histidine 88, histidine 90, and cysteine 96.

The protein belongs to the transcriptional regulatory CopG/NikR family. Homotetramer. Requires Ni(2+) as cofactor.

Its function is as follows. Transcriptional regulator. This is Putative nickel-responsive regulator from Halobacterium salinarum (strain ATCC 700922 / JCM 11081 / NRC-1) (Halobacterium halobium).